Reading from the N-terminus, the 356-residue chain is Phospho-2-dehydro-3-deoxyheptonate aldolase, Tyr-sensitive (356 aa).

It belongs to the class-I DAHP synthase family. Requires a divalent metal cation as cofactor.

The catalysed reaction is D-erythrose 4-phosphate + phosphoenolpyruvate + H2O = 7-phospho-2-dehydro-3-deoxy-D-arabino-heptonate + phosphate. The protein operates within metabolic intermediate biosynthesis; chorismate biosynthesis; chorismate from D-erythrose 4-phosphate and phosphoenolpyruvate: step 1/7. Its activity is regulated as follows. Specifically feedback inhibited by tyrosine with 50% inhibition observed at 9 microM tyrosine, pH 7.0. Stereospecific condensation of phosphoenolpyruvate (PEP) and D-erythrose-4-phosphate (E4P) giving rise to 3-deoxy-D-arabino-heptulosonate-7-phosphate (DAHP). The protein is Phospho-2-dehydro-3-deoxyheptonate aldolase, Tyr-sensitive (aroF) of Escherichia coli (strain K12).